Here is a 963-residue protein sequence, read N- to C-terminus: Protein translocase subunit SecA (963 aa).

ATP is bound by residues Gln-87, 105–109 (GEGKT), and Asp-512. Disordered regions lie at residues 868–909 (GPVM…EDFT) and 924–963 (QFVGGDGSSTPQQVVAGQKVGRNDPCPCGSGKKYKKCHGS). The span at 874 to 886 (PDEEEDGDEDSVE) shows a compositional bias: acidic residues. Zn(2+) contacts are provided by Cys-949, Cys-951, Cys-960, and His-961.

The protein belongs to the SecA family. In terms of assembly, monomer and homodimer. Part of the essential Sec protein translocation apparatus which comprises SecA, SecYEG and auxiliary proteins SecDF. Other proteins may also be involved. The cofactor is Zn(2+).

It is found in the cell inner membrane. It localises to the cytoplasm. The catalysed reaction is ATP + H2O + cellular proteinSide 1 = ADP + phosphate + cellular proteinSide 2.. Functionally, part of the Sec protein translocase complex. Interacts with the SecYEG preprotein conducting channel. Has a central role in coupling the hydrolysis of ATP to the transfer of proteins into and across the cell membrane, serving as an ATP-driven molecular motor driving the stepwise translocation of polypeptide chains across the membrane. The protein is Protein translocase subunit SecA of Solibacter usitatus (strain Ellin6076).